Here is a 346-residue protein sequence, read N- to C-terminus: Phosphoribosylformylglycinamidine cyclo-ligase (346 aa).

Belongs to the AIR synthase family.

The protein localises to the cytoplasm. The enzyme catalyses 2-formamido-N(1)-(5-O-phospho-beta-D-ribosyl)acetamidine + ATP = 5-amino-1-(5-phospho-beta-D-ribosyl)imidazole + ADP + phosphate + H(+). It functions in the pathway purine metabolism; IMP biosynthesis via de novo pathway; 5-amino-1-(5-phospho-D-ribosyl)imidazole from N(2)-formyl-N(1)-(5-phospho-D-ribosyl)glycinamide: step 2/2. This is Phosphoribosylformylglycinamidine cyclo-ligase from Vibrio atlanticus (strain LGP32) (Vibrio splendidus (strain Mel32)).